We begin with the raw amino-acid sequence, 511 residues long: ATP synthase subunit alpha (511 aa).

170–177 is a binding site for ATP; sequence GDRQTGKT.

This sequence belongs to the ATPase alpha/beta chains family. In terms of assembly, F-type ATPases have 2 components, CF(1) - the catalytic core - and CF(0) - the membrane proton channel. CF(1) has five subunits: alpha(3), beta(3), gamma(1), delta(1), epsilon(1). CF(0) has three main subunits: a(1), b(2) and c(9-12). The alpha and beta chains form an alternating ring which encloses part of the gamma chain. CF(1) is attached to CF(0) by a central stalk formed by the gamma and epsilon chains, while a peripheral stalk is formed by the delta and b chains.

It is found in the cell inner membrane. The catalysed reaction is ATP + H2O + 4 H(+)(in) = ADP + phosphate + 5 H(+)(out). Its function is as follows. Produces ATP from ADP in the presence of a proton gradient across the membrane. The alpha chain is a regulatory subunit. The sequence is that of ATP synthase subunit alpha from Pelagibacter ubique (strain HTCC1062).